A 554-amino-acid chain; its full sequence is Glucose-6-phosphate isomerase (554 aa).

Glu-359 serves as the catalytic Proton donor. Residues His-390 and Lys-518 contribute to the active site.

The protein belongs to the GPI family.

It localises to the cytoplasm. It carries out the reaction alpha-D-glucose 6-phosphate = beta-D-fructose 6-phosphate. The protein operates within carbohydrate biosynthesis; gluconeogenesis. It participates in carbohydrate degradation; glycolysis; D-glyceraldehyde 3-phosphate and glycerone phosphate from D-glucose: step 2/4. In terms of biological role, catalyzes the reversible isomerization of glucose-6-phosphate to fructose-6-phosphate. The chain is Glucose-6-phosphate isomerase from Pseudomonas putida (strain ATCC 700007 / DSM 6899 / JCM 31910 / BCRC 17059 / LMG 24140 / F1).